The sequence spans 523 residues: Solute carrier family 35 member F5 (523 aa).

2 consecutive transmembrane segments (helical) span residues 69 to 89 (MALG…SSEL) and 101 to 121 (FFST…FIIW). The residue at position 207 (Ser207) is a Phosphoserine. 8 consecutive transmembrane segments (helical) span residues 243–263 (ISFF…EALS), 268–288 (AIVN…AAVF), 296–316 (FTLS…LVNL), 327–347 (TIGS…IVMI), 361–381 (MFFG…FFLL), 395–415 (VVLM…EFLW), 420–440 (FLTS…LSII), and 452–472 (WLFF…TLLC). The EamA domain maps to 252–316 (FLANLSYQEA…SIGGVVLVNL (65 aa)).

Belongs to the SLC35F solute transporter family.

The protein localises to the membrane. Putative solute transporter. In Pongo abelii (Sumatran orangutan), this protein is Solute carrier family 35 member F5 (SLC35F5).